The chain runs to 154 residues: Putative pre-16S rRNA nuclease (154 aa).

Belongs to the YqgF nuclease family.

The protein localises to the cytoplasm. Its function is as follows. Could be a nuclease involved in processing of the 5'-end of pre-16S rRNA. The protein is Putative pre-16S rRNA nuclease of Rickettsia africae (strain ESF-5).